The sequence spans 747 residues: Myotubularin-related protein 12 (747 aa).

The 439-residue stretch at 205–643 (FDTPKDWCWE…PEIKVWAQRY (439 aa)) folds into the Myotubularin phosphatase domain. The interaction with MTM1 stretch occupies residues 449 to 558 (VPIFLLFLDC…RGQQKGSRFK (110 aa)). The tract at residues 548–575 (DRGQQKGSRFKHQRQLSLPLTQSKSSPK) is disordered. Residues 562–572 (QLSLPLTQSKS) are compositionally biased toward polar residues. Ser564 and Ser601 each carry phosphoserine.

This sequence belongs to the protein-tyrosine phosphatase family. Non-receptor class myotubularin subfamily. Heterodimer with lipid phosphatase MTM1. Heterodimer with lipid phosphatase MTMR2. Expressed in skeletal muscles (at protein level).

The protein localises to the cytoplasm. It localises to the sarcoplasmic reticulum. Its subcellular location is the myofibril. The protein resides in the sarcomere. In terms of biological role, acts as an adapter for the myotubularin-related phosphatases. Regulates phosphatase MTM1 protein stability and possibly its intracellular location. By stabilizing MTM1 protein levels, required for skeletal muscle maintenance but not for myogenesis. In Mus musculus (Mouse), this protein is Myotubularin-related protein 12 (Mtmr12).